A 180-amino-acid chain; its full sequence is Large ribosomal subunit protein bL19 (180 aa).

This sequence belongs to the bacterial ribosomal protein bL19 family.

In terms of biological role, this protein is located at the 30S-50S ribosomal subunit interface and may play a role in the structure and function of the aminoacyl-tRNA binding site. The chain is Large ribosomal subunit protein bL19 from Allorhizobium ampelinum (strain ATCC BAA-846 / DSM 112012 / S4) (Agrobacterium vitis (strain S4)).